The chain runs to 773 residues: uncharacterized protein (773 aa).

The segment at Glu-192–Thr-219 is disordered.

Its subcellular location is the cytoplasm. This is an uncharacterized protein from Schizosaccharomyces pombe (strain 972 / ATCC 24843) (Fission yeast).